The sequence spans 178 residues: uncharacterized protein (178 aa).

An N-terminal signal peptide occupies residues 1 to 23 (MTMFKKISVLFFTLILAGCSSWS).

This is an uncharacterized protein from Haemophilus influenzae (strain ATCC 51907 / DSM 11121 / KW20 / Rd).